Consider the following 243-residue polypeptide: 1-(5-phosphoribosyl)-5-[(5-phosphoribosylamino)methylideneamino] imidazole-4-carboxamide isomerase (243 aa).

The Proton acceptor role is filled by Asp8. The active-site Proton donor is Asp130.

The protein belongs to the HisA/HisF family.

The protein resides in the cytoplasm. The enzyme catalyses 1-(5-phospho-beta-D-ribosyl)-5-[(5-phospho-beta-D-ribosylamino)methylideneamino]imidazole-4-carboxamide = 5-[(5-phospho-1-deoxy-D-ribulos-1-ylimino)methylamino]-1-(5-phospho-beta-D-ribosyl)imidazole-4-carboxamide. Its pathway is amino-acid biosynthesis; L-histidine biosynthesis; L-histidine from 5-phospho-alpha-D-ribose 1-diphosphate: step 4/9. This Acinetobacter baylyi (strain ATCC 33305 / BD413 / ADP1) protein is 1-(5-phosphoribosyl)-5-[(5-phosphoribosylamino)methylideneamino] imidazole-4-carboxamide isomerase.